The sequence spans 345 residues: Transmembrane protein 144 homolog (345 aa).

A run of 10 helical transmembrane segments spans residues 3–23, 32–52, 61–81, 84–104, 120–140, 193–213, 233–253, 265–285, 293–313, and 324–344; these read IAVG…MFVP, GIFV…VVYS, PLAM…VPIM, IGIG…GWAA, PFLN…FSQI, LAII…VPVI, VFSH…GYVI, LVGP…SWFV, AVSF…WSVF, and LRLL…VGVS.

Belongs to the TMEM144 family.

Its subcellular location is the membrane. This is Transmembrane protein 144 homolog from Caenorhabditis elegans.